A 1007-amino-acid chain; its full sequence is Aldehyde reductase lnbA (1007 aa).

An adenylation (A) domain region spans residues 35–428 (QVRQSPSSIA…GRVDHQIKVR (394 aa)). The Carrier domain maps to 540-617 (TLCQDTQTVL…ALASIIDHAK (78 aa)). Residue S577 is modified to O-(pantetheine 4'-phosphoryl)serine. A short-chain dehydrogenase/reductase (R) domain region spans residues 659 to 998 (IFITGATGFV…PTLDCSLLKK (340 aa)).

The protein belongs to the NRP synthetase family.

The enzyme catalyses L-tyrosinal + AMP + diphosphate + NADP(+) = L-tyrosine + ATP + NADPH + H(+). The protein operates within secondary metabolite biosynthesis. Functionally, non-canonical nonribosomal peptide synthetase; part of the lnb gene cluster that mediates the biosynthesis of diastereomeric piperazines. Lna and lnb clusters encode sets of enzymes that produce overlapping sets of previously undescribed metabolites such as piperazinomycin-like metabolites or morpholine. The lna and lnb biosynthetic pathways appear to be part of a signaling network that controls the formation of sclerotia, a resilient overwintering structure. One primary function of the non-canonical nonribosomal peptide synthetases lnaA and lnbA consists in the reduction of L-tyrosine. The presence in the clusters of tailoring enzymes such as the oxidoreductases lnaB, lnbB, lnaE or lnbE, as well as of the cytochrome P450 monooxygenases lnaC, lnaD, or lnbC, might explain formation of various diastereomeric piperazines. This Aspergillus flavus (strain ATCC 200026 / FGSC A1120 / IAM 13836 / NRRL 3357 / JCM 12722 / SRRC 167) protein is Aldehyde reductase lnbA.